A 433-amino-acid chain; its full sequence is Transcriptional enhancer factor TEF-5 (433 aa).

The segment covering 1–12 has biased composition (polar residues); sequence MASNSWNASSSP. A disordered region spans residues 1 to 35; it reads MASNSWNASSSPGEGREDGQDGMDKSLDNDAEGVW. The span at 14-28 shows a compositional bias: basic and acidic residues; the sequence is EGREDGQDGMDKSLD. The segment at residues 28-104 is a DNA-binding region (TEA); that stretch reads DNDAEGVWSP…QVLARREISG (77 aa). Residues 171 to 433 form a transcriptional activation region; that stretch reads GPSQDIKPFA…QHHVYKLVKD (263 aa).

In terms of tissue distribution, high levels in cardiac muscle, low in skeletal muscle. Intermediate levels in gizzard and lung, low levels in kidney.

It localises to the nucleus. Functionally, transcription factor which plays a key role in the Hippo signaling pathway, a pathway involved in organ size control and tumor suppression by restricting proliferation and promoting apoptosis. The core of this pathway is composed of a kinase cascade wherein MST1/MST2, in complex with its regulatory protein SAV1, phosphorylates and activates LATS1/2 in complex with its regulatory protein MOB1, which in turn phosphorylates and inactivates YAP1 oncoprotein and WWTR1/TAZ. This is Transcriptional enhancer factor TEF-5 (TEAD3) from Gallus gallus (Chicken).